The primary structure comprises 256 residues: DNA repair protein RecO (256 aa).

The protein belongs to the RecO family.

Involved in DNA repair and RecF pathway recombination. This chain is DNA repair protein RecO, found in Streptococcus equi subsp. zooepidemicus (strain MGCS10565).